Reading from the N-terminus, the 452-residue chain is Tripartite motif-containing protein 51 (452 aa).

The RING-type zinc finger occupies Cys15–Lys56. Residues Ser88–Ile129 form a B box-type zinc finger. Residues Cys93, His96, Cys115, and His121 each coordinate Zn(2+). In terms of domain architecture, B30.2/SPRY spans Glu269–Phe452.

The protein belongs to the TRIM/RBCC family.

The chain is Tripartite motif-containing protein 51 (TRIM51) from Homo sapiens (Human).